We begin with the raw amino-acid sequence, 402 residues long: Leucine aminopeptidase 1 (402 aa).

Residues 1–18 (MKISNASLLALLLPAASA) form the signal peptide. Residues 19-92 (RFVEQAEQNR…GTFNKRPYKK (74 aa)) constitute a propeptide that is removed on maturation. 2 N-linked (GlcNAc...) asparagine glycosylation sites follow: N111 and N184. Residues H192, D211, E250, and D277 each coordinate Zn(2+). The N-linked (GlcNAc...) asparagine glycan is linked to N304. A disulfide bridge links C326 with C330. H359 provides a ligand contact to Zn(2+).

It belongs to the peptidase M28 family. M28E subfamily. As to quaternary structure, monomer. Zn(2+) is required as a cofactor.

The protein resides in the secreted. Extracellular aminopeptidase that allows assimilation of proteinaceous substrates. In Neurospora crassa (strain ATCC 24698 / 74-OR23-1A / CBS 708.71 / DSM 1257 / FGSC 987), this protein is Leucine aminopeptidase 1 (lap1).